Here is a 283-residue protein sequence, read N- to C-terminus: Pantothenate synthetase (283 aa).

Position 26-33 (26-33 (MGNLHAGH)) interacts with ATP. The active-site Proton donor is the H33. Residue Q57 participates in (R)-pantoate binding. Q57 is a beta-alanine binding site. 144–147 (GRKD) lines the ATP pocket. Q150 contacts (R)-pantoate. Residues L173 and 181 to 184 (MSSR) contribute to the ATP site.

This sequence belongs to the pantothenate synthetase family. Homodimer.

Its subcellular location is the cytoplasm. The enzyme catalyses (R)-pantoate + beta-alanine + ATP = (R)-pantothenate + AMP + diphosphate + H(+). The protein operates within cofactor biosynthesis; (R)-pantothenate biosynthesis; (R)-pantothenate from (R)-pantoate and beta-alanine: step 1/1. Catalyzes the condensation of pantoate with beta-alanine in an ATP-dependent reaction via a pantoyl-adenylate intermediate. This Thiobacillus denitrificans (strain ATCC 25259 / T1) protein is Pantothenate synthetase.